A 250-amino-acid chain; its full sequence is 5-oxoprolinase subunit A (250 aa).

The protein belongs to the LamB/PxpA family. As to quaternary structure, forms a complex composed of PxpA, PxpB and PxpC.

The enzyme catalyses 5-oxo-L-proline + ATP + 2 H2O = L-glutamate + ADP + phosphate + H(+). Catalyzes the cleavage of 5-oxoproline to form L-glutamate coupled to the hydrolysis of ATP to ADP and inorganic phosphate. The chain is 5-oxoprolinase subunit A from Staphylococcus aureus (strain MRSA252).